The primary structure comprises 258 residues: Axonemal dynein light intermediate polypeptide 1 (258 aa).

2 disordered regions span residues 1–60 (MIPP…CVPD) and 202–231 (DLER…EEKK). Residues 176–255 (MRKALQAEQG…LKAQLEGIIA (80 aa)) are a coiled coil.

The protein belongs to the inner dynein arm light chain family. Interacts with CFAP45. Interacts with DYNC1H1. Predominantly expressed in the testis, also detected at lower levels in several tissues expressing cilia. Strongly expressed in elongating spermatid cells (at protein level).

The protein resides in the cell projection. Its subcellular location is the cilium. The protein localises to the flagellum. It is found in the dynein axonemal particle. It localises to the cytoplasm. Functionally, involved in sperm flagellum assembly. The sequence is that of Axonemal dynein light intermediate polypeptide 1 from Mus musculus (Mouse).